The following is a 210-amino-acid chain: Large ribosomal subunit protein uL3 (210 aa).

The interval 123 to 144 is disordered; that stretch reads KRHGQSRGPMAHGSRYHRRPGS.

This sequence belongs to the universal ribosomal protein uL3 family. As to quaternary structure, part of the 50S ribosomal subunit. Forms a cluster with proteins L14 and L19.

One of the primary rRNA binding proteins, it binds directly near the 3'-end of the 23S rRNA, where it nucleates assembly of the 50S subunit. This chain is Large ribosomal subunit protein uL3, found in Alkaliphilus metalliredigens (strain QYMF).